The following is a 244-amino-acid chain: 5-oxoprolinase subunit A (244 aa).

It belongs to the LamB/PxpA family. Forms a complex composed of PxpA, PxpB and PxpC.

It catalyses the reaction 5-oxo-L-proline + ATP + 2 H2O = L-glutamate + ADP + phosphate + H(+). Functionally, catalyzes the cleavage of 5-oxoproline to form L-glutamate coupled to the hydrolysis of ATP to ADP and inorganic phosphate. The chain is 5-oxoprolinase subunit A from Escherichia fergusonii (strain ATCC 35469 / DSM 13698 / CCUG 18766 / IAM 14443 / JCM 21226 / LMG 7866 / NBRC 102419 / NCTC 12128 / CDC 0568-73).